A 438-amino-acid chain; its full sequence is Adenylosuccinate synthetase (438 aa).

GTP contacts are provided by residues glycine 13 to lysine 19 and glycine 41 to threonine 43. Catalysis depends on aspartate 14, which acts as the Proton acceptor. Residues aspartate 14 and glycine 41 each coordinate Mg(2+). IMP is bound by residues aspartate 14 to lysine 17, asparagine 39 to histidine 42, threonine 136, arginine 150, glutamine 231, threonine 246, and arginine 310. The Proton donor role is filled by histidine 42. Substrate is bound at residue serine 306–arginine 312. GTP contacts are provided by residues arginine 312, lysine 338 to aspartate 340, and serine 421 to glycine 423.

This sequence belongs to the adenylosuccinate synthetase family. Homodimer. Requires Mg(2+) as cofactor.

The protein resides in the cytoplasm. It carries out the reaction IMP + L-aspartate + GTP = N(6)-(1,2-dicarboxyethyl)-AMP + GDP + phosphate + 2 H(+). It functions in the pathway purine metabolism; AMP biosynthesis via de novo pathway; AMP from IMP: step 1/2. Its function is as follows. Plays an important role in the de novo pathway of purine nucleotide biosynthesis. Catalyzes the first committed step in the biosynthesis of AMP from IMP. This is Adenylosuccinate synthetase from Blochmanniella floridana.